The following is a 425-amino-acid chain: tRNA(Met) cytidine acetate ligase (425 aa).

Residues 7 to 20 (IVEY…HLYH), G102, N165, and 190 to 191 (RI) each bind ATP.

Belongs to the TmcAL family.

The protein resides in the cytoplasm. The enzyme catalyses cytidine(34) in elongator tRNA(Met) + acetate + ATP = N(4)-acetylcytidine(34) in elongator tRNA(Met) + AMP + diphosphate. Its function is as follows. Catalyzes the formation of N(4)-acetylcytidine (ac(4)C) at the wobble position of elongator tRNA(Met), using acetate and ATP as substrates. First activates an acetate ion to form acetyladenylate (Ac-AMP) and then transfers the acetyl group to tRNA to form ac(4)C34. The chain is tRNA(Met) cytidine acetate ligase from Thermosipho melanesiensis (strain DSM 12029 / CIP 104789 / BI429).